The sequence spans 244 residues: Sortase B (244 aa).

Residues 1–6 (MRMKRF) lie on the Cytoplasmic side of the membrane. The helical transmembrane segment at 7 to 24 (LTIVQILLVVIIIIFGYK) threads the bilayer. The Extracellular portion of the chain corresponds to 25–244 (IVQTYIEDKQ…VVVAKIIKVS (220 aa)). Cysteine 223 functions as the Acyl-thioester intermediate in the catalytic mechanism.

This sequence belongs to the bacterial sortase family. Class B subfamily.

The protein localises to the cell membrane. The catalysed reaction is The enzyme catalyzes a cell wall sorting reaction in which a surface protein with a sorting signal containing a NPXTN motif is cleaved between the Thr and Asn residue. The resulting threonine carboxyl end of the protein is covalently attached to a pentaglycine cross-bridge of peptidoglycan.. Inhibited by MTSET (2-(Trimethylammonium)-ethyl-methanethiosulfonate) and E64 ([n- (l-3-trans-carboxyoxirane-2-carbonyl)-l-leucyl]-amido(4-guanido)butane). Inhibited by coptisine. In terms of biological role, transpeptidase that anchors surface proteins to the cell wall. Recognizes and modifies its substrate by proteolytic cleavage of a C-terminal sorting signal. Following cleavage, a covalent intermediate is formed via a thioester bond between the sortase and its substrate, which is then transferred and covalently attached to the cell wall. This sortase recognizes an Asn-Pro-Gln-Thr-Asn (NPQTN) motif in IsdC, which is cleaved by the sortase between the threonine and aspargine residues; may only have 1 substrate in this bacterium. May be dedicated to the process of iron acquisition during bacterial infection. The sequence is that of Sortase B from Staphylococcus aureus (strain NCTC 8325 / PS 47).